The sequence spans 319 residues: Biotin synthase (319 aa).

Residues 44–273 (IHGDGIDLCS…EAKIRLAGGR (230 aa)) enclose the Radical SAM core domain. Cysteine 62, cysteine 66, and cysteine 69 together coordinate [4Fe-4S] cluster. [2Fe-2S] cluster-binding residues include serine 106, cysteine 138, cysteine 198, and arginine 268.

This sequence belongs to the radical SAM superfamily. Biotin synthase family. In terms of assembly, homodimer. The cofactor is [4Fe-4S] cluster. [2Fe-2S] cluster serves as cofactor.

It carries out the reaction (4R,5S)-dethiobiotin + (sulfur carrier)-SH + 2 reduced [2Fe-2S]-[ferredoxin] + 2 S-adenosyl-L-methionine = (sulfur carrier)-H + biotin + 2 5'-deoxyadenosine + 2 L-methionine + 2 oxidized [2Fe-2S]-[ferredoxin]. Its pathway is cofactor biosynthesis; biotin biosynthesis; biotin from 7,8-diaminononanoate: step 2/2. In terms of biological role, catalyzes the conversion of dethiobiotin (DTB) to biotin by the insertion of a sulfur atom into dethiobiotin via a radical-based mechanism. The sequence is that of Biotin synthase from Clostridium perfringens (strain 13 / Type A).